The sequence spans 72 residues: Gene 79 protein (72 aa).

In Mycobacterium (Mycobacteriophage L5), this protein is Gene 79 protein (79).